Consider the following 430-residue polypeptide: Putative O-antigen transporter (430 aa).

The next 12 helical transmembrane spans lie at 23-39 (IIIA…LISM), 45-61 (YAIF…CSAV), 96-112 (IAII…SGVI), 131-147 (LFFT…IGAI), 163-179 (LLNA…LLYI), 192-208 (LIVL…CYIV), 236-252 (LFTL…YMVI), 266-282 (VTMK…TAIL), 309-325 (ILLG…FIYL), 342-358 (VSIL…CIRV), 373-389 (LKIL…IGGI), and 400-416 (ISGV…LTVF).

It localises to the cell inner membrane. It participates in bacterial outer membrane biogenesis; LPS O-antigen biosynthesis. May be involved in the translocation process of the nascent O-polysaccharide molecules and/or its ligation to lipid A core units. This chain is Putative O-antigen transporter (rfbX), found in Salmonella typhimurium (strain LT2 / SGSC1412 / ATCC 700720).